The following is a 153-amino-acid chain: Superoxide dismutase [Cu-Zn] (153 aa).

Cu cation is bound by residues histidine 45, histidine 47, and histidine 62. Residues cysteine 56 and cysteine 145 are joined by a disulfide bond. Zn(2+) is bound by residues histidine 62, histidine 70, histidine 79, and aspartate 82. Cu cation is bound at residue histidine 119.

Belongs to the Cu-Zn superoxide dismutase family. Homodimer. Requires Cu cation as cofactor. Zn(2+) serves as cofactor.

The protein resides in the cytoplasm. The catalysed reaction is 2 superoxide + 2 H(+) = H2O2 + O2. In terms of biological role, destroys radicals which are normally produced within the cells and which are toxic to biological systems. This Drosophila virilis (Fruit fly) protein is Superoxide dismutase [Cu-Zn].